The following is a 720-amino-acid chain: 1,4-alpha-glucan branching enzyme GlgB (720 aa).

Asp400 (nucleophile) is an active-site residue. The Proton donor role is filled by Glu453.

This sequence belongs to the glycosyl hydrolase 13 family. GlgB subfamily. As to quaternary structure, monomer.

The enzyme catalyses Transfers a segment of a (1-&gt;4)-alpha-D-glucan chain to a primary hydroxy group in a similar glucan chain.. It functions in the pathway glycan biosynthesis; glycogen biosynthesis. Catalyzes the formation of the alpha-1,6-glucosidic linkages in glycogen by scission of a 1,4-alpha-linked oligosaccharide from growing alpha-1,4-glucan chains and the subsequent attachment of the oligosaccharide to the alpha-1,6 position. The protein is 1,4-alpha-glucan branching enzyme GlgB of Chlamydia pneumoniae (Chlamydophila pneumoniae).